Here is a 117-residue protein sequence, read N- to C-terminus: Non-specific lipid-transfer protein B (117 aa).

Positions 1-25 are cleaved as a signal peptide; the sequence is MAGLVKLSCLVLACMIVAGPIATNA. Intrachain disulfides connect Cys29/Cys76, Cys39/Cys53, Cys54/Cys99, and Cys74/Cys113.

The protein belongs to the plant LTP family.

Its function is as follows. Plant non-specific lipid-transfer proteins transfer phospholipids as well as galactolipids across membranes. May play a role in wax or cutin deposition in the cell walls of expanding epidermal cells and certain secretory tissues. The chain is Non-specific lipid-transfer protein B (WAX9B) from Brassica oleracea var. italica (Broccoli).